The sequence spans 96 residues: Protein RnfH (96 aa).

The protein belongs to the UPF0125 (RnfH) family.

The polypeptide is Protein RnfH (Escherichia coli O127:H6 (strain E2348/69 / EPEC)).